Reading from the N-terminus, the 300-residue chain is Nicotinate-nucleotide pyrophosphorylase [carboxylating] (300 aa).

The important for hexamer formation stretch occupies residues 5–9; the sequence is QLLPK. Quinolinate-binding positions include arginine 107, 150 to 151, 172 to 173, lysine 183, glutamate 213, aspartate 234, 260 to 262, and glycine 282; these read RK, HR, and SGG.

This sequence belongs to the NadC/ModD family. As to quaternary structure, hexamer formed by 3 homodimers.

The enzyme catalyses nicotinate beta-D-ribonucleotide + CO2 + diphosphate = quinolinate + 5-phospho-alpha-D-ribose 1-diphosphate + 2 H(+). Its pathway is cofactor biosynthesis; NAD(+) biosynthesis; nicotinate D-ribonucleotide from quinolinate: step 1/1. Functionally, involved in the catabolism of quinolinic acid (QA). The sequence is that of Nicotinate-nucleotide pyrophosphorylase [carboxylating] (qprt) from Dictyostelium discoideum (Social amoeba).